The primary structure comprises 129 residues: Small ribosomal subunit protein uS9 (129 aa).

The protein belongs to the universal ribosomal protein uS9 family.

This Helicobacter hepaticus (strain ATCC 51449 / 3B1) protein is Small ribosomal subunit protein uS9.